The sequence spans 294 residues: MKTRTRKGAVGIGTLIVFIAMVLVAAVAAAVLINTSGYLQQKSQATGRETTQEVASGIKVERVVGKTDLPYTNIGSDSTELDYIRQLAIYVSPNAGSSGIDLSNTKVILSNGEKEAVLKYAGGPDDDYDAFTKGVQNDIFDLYFKYSSDGTNWNNEHSGLAAWKNLYYTGTNHDPAKNFGIIVIQDADNSLTEDYPTLNKGDLVVLTVLVGSLEEYTGNPSNDDNAVYETGGAKYDYIDVNGNSDTTDTIQGVFGEGIPAGTKITGEVVPEFGAPGVIEFTTPSTYTEAVMELQ.

Residues 1–8 (MKTRTRKG) constitute a propeptide that is removed on maturation.

This sequence belongs to the archaeal flagellin family.

It is found in the archaeal flagellum. In terms of biological role, flagellin is the subunit protein which polymerizes to form the filaments of archaeal flagella. The sequence is that of Flagellin B1 (flaB1) from Thermococcus kodakarensis (strain ATCC BAA-918 / JCM 12380 / KOD1) (Pyrococcus kodakaraensis (strain KOD1)).